A 396-amino-acid chain; its full sequence is 1-deoxy-D-xylulose 5-phosphate reductoisomerase (396 aa).

NADPH-binding residues include threonine 13, glycine 14, serine 15, isoleucine 16, and asparagine 127. Lysine 128 provides a ligand contact to 1-deoxy-D-xylulose 5-phosphate. Glutamate 129 is an NADPH binding site. Aspartate 153 is a binding site for Mn(2+). 1-deoxy-D-xylulose 5-phosphate-binding residues include serine 154, glutamate 155, serine 184, and histidine 207. Glutamate 155 lines the Mn(2+) pocket. Glycine 213 provides a ligand contact to NADPH. 4 residues coordinate 1-deoxy-D-xylulose 5-phosphate: serine 220, asparagine 225, lysine 226, and glutamate 229. Glutamate 229 lines the Mn(2+) pocket.

Belongs to the DXR family. The cofactor is Mg(2+). Requires Mn(2+) as cofactor.

The enzyme catalyses 2-C-methyl-D-erythritol 4-phosphate + NADP(+) = 1-deoxy-D-xylulose 5-phosphate + NADPH + H(+). It participates in isoprenoid biosynthesis; isopentenyl diphosphate biosynthesis via DXP pathway; isopentenyl diphosphate from 1-deoxy-D-xylulose 5-phosphate: step 1/6. Functionally, catalyzes the NADPH-dependent rearrangement and reduction of 1-deoxy-D-xylulose-5-phosphate (DXP) to 2-C-methyl-D-erythritol 4-phosphate (MEP). This is 1-deoxy-D-xylulose 5-phosphate reductoisomerase from Pseudomonas savastanoi pv. phaseolicola (strain 1448A / Race 6) (Pseudomonas syringae pv. phaseolicola (strain 1448A / Race 6)).